Consider the following 184-residue polypeptide: Cell number regulator 5 (184 aa).

The chain crosses the membrane as a helical span at residues 91 to 111; sequence MLWGLLTSLCCVFTGGLVLAV. Residues 162-184 form a disordered region; the sequence is RTGSGSSPAPNVTPPPVQTMDEL.

It belongs to the cornifelin family. As to expression, expressed in roots, leaves, stalks, immature ears, endosperm and pollen.

It localises to the membrane. In Zea mays (Maize), this protein is Cell number regulator 5 (CNR5).